The chain runs to 372 residues: Cytochrome b (372 aa).

4 helical membrane passes run 25–45, 69–90, 105–125, and 170–190; these read FGSM…FLAI, WIMQ…YIHI, WLSG…GYVL, and FFAL…IHII. Heme b is bound by residues His75 and His89. His174 and His188 together coordinate heme b. His193 serves as a coordination point for a ubiquinone. Transmembrane regions (helical) follow at residues 218 to 238, 280 to 300, 312 to 332, and 339 to 358; these read YKDM…LSFL, LGGT…PFTH, LSQT…WTAT, and FITI…IMTP.

This sequence belongs to the cytochrome b family. The cytochrome bc1 complex contains 3 respiratory subunits (MT-CYB, CYC1 and UQCRFS1), 2 core proteins (UQCRC1 and UQCRC2) and probably 6 low-molecular weight proteins. The cofactor is heme b.

Its subcellular location is the mitochondrion inner membrane. Component of the ubiquinol-cytochrome c reductase complex (complex III or cytochrome b-c1 complex) that is part of the mitochondrial respiratory chain. The b-c1 complex mediates electron transfer from ubiquinol to cytochrome c. Contributes to the generation of a proton gradient across the mitochondrial membrane that is then used for ATP synthesis. The protein is Cytochrome b (MT-CYB) of Aspidelaps scutatus (Shield-nose snake).